The following is a 563-amino-acid chain: Lipase 2 (563 aa).

The first 19 residues, 1 to 19 (MVSKSLFLAAAVNLAGVLA), serve as a signal peptide directing secretion. Q20 carries the pyrrolidone carboxylic acid modification. C80 and C124 are joined by a disulfide. S236 (acyl-ester intermediate) is an active-site residue. A disulfide bridge links C295 with C307. N-linked (GlcNAc...) asparagine glycosylation is present at N302. Catalysis depends on E373, which acts as the Charge relay system. N383 carries an N-linked (GlcNAc...) asparagine glycan. Catalysis depends on H482, which acts as the Charge relay system.

The protein belongs to the type-B carboxylesterase/lipase family. As to quaternary structure, monomer.

It localises to the secreted. It catalyses the reaction a triacylglycerol + H2O = a diacylglycerol + a fatty acid + H(+). Functionally, hydrolyzes all ester bonds in triglyceride and displays a high affinity for triolein. For unsaturated substrates having long fatty acyl chains (C18:2 cis-9, cis-12 and C18:3 cis-9, cis-12, cis-15) GCL I shows higher specific activity than GCL II, whereas GCL II shows higher specific activity against saturated substrates having short fatty acid chains (C8, C10, C12 and C14). The sequence is that of Lipase 2 (LIP2) from Geotrichum candidum (Oospora lactis).